A 158-amino-acid chain; its full sequence is Phosphopantetheine adenylyltransferase (158 aa).

A substrate-binding site is contributed by Ser8. ATP-binding positions include 8–9 (SF) and His16. The substrate site is built by Lys40, Thr72, and Arg86. Residues 87 to 89 (GLR), Glu97, and 122 to 128 (HSFLSSS) each bind ATP.

Belongs to the bacterial CoaD family. Homohexamer. Mg(2+) serves as cofactor.

It localises to the cytoplasm. It catalyses the reaction (R)-4'-phosphopantetheine + ATP + H(+) = 3'-dephospho-CoA + diphosphate. The protein operates within cofactor biosynthesis; coenzyme A biosynthesis; CoA from (R)-pantothenate: step 4/5. Reversibly transfers an adenylyl group from ATP to 4'-phosphopantetheine, yielding dephospho-CoA (dPCoA) and pyrophosphate. This chain is Phosphopantetheine adenylyltransferase, found in Prochlorococcus marinus (strain NATL1A).